We begin with the raw amino-acid sequence, 371 residues long: UDP-N-acetylglucosamine--N-acetylmuramyl-(pentapeptide) pyrophosphoryl-undecaprenol N-acetylglucosamine transferase (371 aa).

UDP-N-acetyl-alpha-D-glucosamine-binding positions include 15–17 (TGG), N126, R172, S199, I256, 275–280 (ALTVSE), and Q301.

Belongs to the glycosyltransferase 28 family. MurG subfamily.

Its subcellular location is the cell inner membrane. It catalyses the reaction di-trans,octa-cis-undecaprenyl diphospho-N-acetyl-alpha-D-muramoyl-L-alanyl-D-glutamyl-meso-2,6-diaminopimeloyl-D-alanyl-D-alanine + UDP-N-acetyl-alpha-D-glucosamine = di-trans,octa-cis-undecaprenyl diphospho-[N-acetyl-alpha-D-glucosaminyl-(1-&gt;4)]-N-acetyl-alpha-D-muramoyl-L-alanyl-D-glutamyl-meso-2,6-diaminopimeloyl-D-alanyl-D-alanine + UDP + H(+). It participates in cell wall biogenesis; peptidoglycan biosynthesis. In terms of biological role, cell wall formation. Catalyzes the transfer of a GlcNAc subunit on undecaprenyl-pyrophosphoryl-MurNAc-pentapeptide (lipid intermediate I) to form undecaprenyl-pyrophosphoryl-MurNAc-(pentapeptide)GlcNAc (lipid intermediate II). This chain is UDP-N-acetylglucosamine--N-acetylmuramyl-(pentapeptide) pyrophosphoryl-undecaprenol N-acetylglucosamine transferase, found in Francisella tularensis subsp. tularensis (strain FSC 198).